Reading from the N-terminus, the 118-residue chain is Large ribosomal subunit protein uL18 (118 aa).

The protein belongs to the universal ribosomal protein uL18 family. As to quaternary structure, part of the 50S ribosomal subunit; part of the 5S rRNA/L5/L18/L25 subcomplex. Contacts the 5S and 23S rRNAs.

This is one of the proteins that bind and probably mediate the attachment of the 5S RNA into the large ribosomal subunit, where it forms part of the central protuberance. This is Large ribosomal subunit protein uL18 from Rickettsia felis (strain ATCC VR-1525 / URRWXCal2) (Rickettsia azadi).